A 255-amino-acid chain; its full sequence is Hydroxyacylglutathione hydrolase (255 aa).

Zn(2+) is bound by residues His56, His58, Asp60, His61, His112, Asp129, and His167.

Belongs to the metallo-beta-lactamase superfamily. Glyoxalase II family. Monomer. It depends on Zn(2+) as a cofactor.

The catalysed reaction is an S-(2-hydroxyacyl)glutathione + H2O = a 2-hydroxy carboxylate + glutathione + H(+). Its pathway is secondary metabolite metabolism; methylglyoxal degradation; (R)-lactate from methylglyoxal: step 2/2. Functionally, thiolesterase that catalyzes the hydrolysis of S-D-lactoyl-glutathione to form glutathione and D-lactic acid. The sequence is that of Hydroxyacylglutathione hydrolase from Pseudomonas fluorescens (strain SBW25).